The following is a 397-amino-acid chain: LIM/homeobox protein Lhx3 (397 aa).

LIM zinc-binding domains are found at residues 31–81 and 90–144; these read CAGC…CKDD and CAAC…CKAD. A Phosphothreonine modification is found at Thr63. Position 71 is a phosphoserine (Ser71). Residues 157-216 constitute a DNA-binding region (homeobox); that stretch reads AKRPRTTITAKQLETLKSAYNTSPKPARHVREQLSSETGLDMRVVQVWFQNRRAKEKRLK. The segment at 212–397 is disordered; the sequence is EKRLKKDAGR…WLDEVDHAQF (186 aa). At Tyr227 the chain carries Phosphotyrosine. A phosphoserine mark is found at Ser234 and Ser238. Pro residues predominate over residues 316–331; that stretch reads GVPPSPAAPQSLPGPQ.

In terms of assembly, interacts with POU1F1. At neuronal promoters, interacts with LDB1, in motor neurons LDB1 is displaced by ISL1 and a ternary complex is formed in which ISL1 contacts both LHX3 and LDB1; allosteric structural changes in the DNA binding domain of LHX3, induced by the ISL1-LHX3 interaction, may explain differences in sequence specificity of the different complexes. Interacts with LDB2. May interact with CITED2/MRG1.

Its subcellular location is the nucleus. Transcription factor. Recognizes and binds to the consensus sequence motif 5'-AATTAATTA-3' in the regulatory elements of target genes, such as glycoprotein hormones alpha chain CGA and visual system homeobox CHX10, positively modulating transcription; transcription can be co-activated by LDB2. Synergistically enhances transcription from the prolactin promoter in cooperation with POU1F1/Pit-1. Required for the establishment of the specialized cells of the pituitary gland and the nervous system. Involved in the development of interneurons and motor neurons in cooperation with LDB1 and ISL1. The sequence is that of LIM/homeobox protein Lhx3 (LHX3) from Homo sapiens (Human).